A 734-amino-acid chain; its full sequence is MATKFPKFSQGLAQDPTTRRIWFGIATAHDFESHDGMTEENLYQKIFASHFGQLAIIFLWTSGNLFHVAWQGNFEQWIKDPLHIRPIAHAIWDPHFGQPAVEAFTRGGASGPVNIATSGVYQWWYTIGMRTNQELYTASVFLSLMAGVFLFAGWLHLQPKFQPSLSWFKNAESRLNHHLSGLFGVSSLAWTGHLVHVAIPAARGQRVGWDNFLTTLPHPEGLTPFFTGNWAAYAANPDSANHIFGTSAGAGTAILTFLGGFHPQTQSLWLTDIAHHHLAIAVVFIIAGHQYRTNFGIGHSMREILDAHTPPAGGLGAGHKGLFDTVNNSLHFQLGLALASVGTICSMVAQHIYSLPPYAFLAQDYTAQAALYTHHQYIAGFIMCGAFAHGAIFFIRDYDPEQNKGNVLARILDHKEAIISHLSWVSLFLGFHTLGLYVHNDVMQAFGTPEKQILIEPVFAQWIQAAQGKALYGFDFLLSSSASPAYSASQSVWLPGWLDAINSNNNSLFLTIGPGDFLVHHAIALGLHTTTLILVKGALDARGSKLMPDKKDFGYSFPCDGPGRGGTCDISAWDAFYLAVFWMLNTIGWVTFYFHWKHLGIWQGNVSQFNESSTYLMGWLRDYLWLNSSQLINGYNPNGMNSLGVWSWAFLLAHLIYATGFMFLISWRGYWQELIETLVWSHERTPLASLVRWRDKPVALSIVQARLVGLVHFSVGYVLTYGSFLIASTSSKFG.

The next 8 helical transmembrane spans lie at I46–A69, L135–Q158, L175–I199, I273–Y291, L330–Y353, A369–I395, A417–H439, and F517–V535. The [4Fe-4S] cluster site is built by C559 and C568. Helical transmembrane passes span A575–W596 and L643–I665. Residues H654, M662, and Y670 each coordinate chlorophyll a. Position 671 (W671) interacts with phylloquinone. The chain crosses the membrane as a helical span at residues L707–A727.

The protein belongs to the PsaA/PsaB family. The PsaA/B heterodimer binds the P700 chlorophyll special pair and subsequent electron acceptors. PSI consists of a core antenna complex that captures photons, and an electron transfer chain that converts photonic excitation into a charge separation. The eukaryotic PSI reaction center is composed of at least 11 subunits. P700 is a chlorophyll a/chlorophyll a' dimer, A0 is one or more chlorophyll a, A1 is one or both phylloquinones and FX is a shared 4Fe-4S iron-sulfur center. serves as cofactor.

The protein localises to the plastid. It localises to the chloroplast thylakoid membrane. It carries out the reaction reduced [plastocyanin] + hnu + oxidized [2Fe-2S]-[ferredoxin] = oxidized [plastocyanin] + reduced [2Fe-2S]-[ferredoxin]. Its function is as follows. PsaA and PsaB bind P700, the primary electron donor of photosystem I (PSI), as well as the electron acceptors A0, A1 and FX. PSI is a plastocyanin/cytochrome c6-ferredoxin oxidoreductase, converting photonic excitation into a charge separation, which transfers an electron from the donor P700 chlorophyll pair to the spectroscopically characterized acceptors A0, A1, FX, FA and FB in turn. Oxidized P700 is reduced on the lumenal side of the thylakoid membrane by plastocyanin or cytochrome c6. This Oltmannsiellopsis viridis (Marine flagellate) protein is Photosystem I P700 chlorophyll a apoprotein A2.